We begin with the raw amino-acid sequence, 314 residues long: Ribosomal RNA small subunit methyltransferase H (314 aa).

Residues 36–38, aspartate 56, phenylalanine 81, aspartate 103, and glutamine 110 each bind S-adenosyl-L-methionine; that span reads GGH.

The protein belongs to the methyltransferase superfamily. RsmH family.

The protein localises to the cytoplasm. The catalysed reaction is cytidine(1402) in 16S rRNA + S-adenosyl-L-methionine = N(4)-methylcytidine(1402) in 16S rRNA + S-adenosyl-L-homocysteine + H(+). Its function is as follows. Specifically methylates the N4 position of cytidine in position 1402 (C1402) of 16S rRNA. This is Ribosomal RNA small subunit methyltransferase H from Shewanella sediminis (strain HAW-EB3).